The chain runs to 323 residues: o-succinylbenzoate synthase (323 aa).

Catalysis depends on Lys134, which acts as the Proton donor. Positions 162, 191, and 214 each coordinate Mg(2+). Lys236 serves as the catalytic Proton acceptor.

It belongs to the mandelate racemase/muconate lactonizing enzyme family. MenC type 1 subfamily. The cofactor is a divalent metal cation.

It carries out the reaction (1R,6R)-6-hydroxy-2-succinyl-cyclohexa-2,4-diene-1-carboxylate = 2-succinylbenzoate + H2O. It functions in the pathway quinol/quinone metabolism; 1,4-dihydroxy-2-naphthoate biosynthesis; 1,4-dihydroxy-2-naphthoate from chorismate: step 4/7. It participates in quinol/quinone metabolism; menaquinone biosynthesis. Converts 2-succinyl-6-hydroxy-2,4-cyclohexadiene-1-carboxylate (SHCHC) to 2-succinylbenzoate (OSB). The chain is o-succinylbenzoate synthase from Yersinia pestis bv. Antiqua (strain Antiqua).